The following is a 1369-amino-acid chain: MITRELQLLAYTAEPSALETAAIAALRSIPGLQNVIIQTQDAYLVTFFTSPRPLREHQLKIETLLFIKAALRTFDEQQYLPIPLSALSSSFTFVYGPDINRLPTSQSNELTAILQTRDAREKVFNVERIQHCRLLFFSGPGSEQLNHTHYALLREILCGDLTLYQPFRNELFNSSLDFYATIYPPRFLKDKVRHYVHGDINLNITGAASNYNWASPHTAVTDSEIFRIPYTHVVRFIDRWEIRVRVPDVGFHGSRGVRFRQHGGAAYMCSTLNSTTGATGCLQKGMITSFISQPTLGQLGLITEPMCGWGQQELSATAIQMLTKYANTVEAFAKTLNYAGVPLVQGFVTLSPTLREKRAMAFTGSLSITGLPPYILKPPTAETLDAAMERNRQLLLVEVGYPDYGKGKLHNPVNIMNSESGRHAHILHQALRQLMIITPFGKVIHICCDWQYNEKVTMFKIAKACGDLGLSMSARSLPAHTLRLLKKWNFRNLNYNHRIIKNSWLKVDSAAALVVIADNEYQDVSKKMDIALSGWGCPFHILGNLTPNSNTIVISDKNQYGEIVDIQYKMHMPKQPSEGTEDTPLAPDMSNIQLFKNLDVTEDLLLQVLRHPTVGCKAHIVHHVDRCGNGHIAQQPGVGPFDIPLCDFSVTVHNLVDGDIREGMESVPRVWAADWRVARRLIETQYSTPGLDITDATLANNLGLTYHIPSEHQVTVESKKYGNCIGIGEKTTFTQRDPLLGTILAIVESCTNCILGPVENYEEFLIGLSISVPEGIHYRHEVNSIMAMAKDFCSSMNFGFQVNSAENGNCLLRSVVATANAPCVVPGPSLKPYFKKPGSAILRVNLHTEHFLSGGICCMASGIGASETFTPTPSQLRNLLQFMLIVKAENLALSGHDVSDGGLICAVCEMMFAGGLSARLIIHDEDEEPVFPLFSETPGFVLEVNAIDVAAIIARANLYNVECIQIGEVVESDTFTVFHQNTQLLSVPVSRLKHNWTLFSKSVDLLYVKEDQVLPEETSYGNYEVHLTVDPYSIISQSTTRPNVLVHLLPGCGYPDALLAALTNSGFSPDTVVYPGCKYRHNRREDAAPGSPTADDFIAGIVLYGSSNIDSDVGDSTIRQWLNVNRQVINDVRRNLKAKGSFTLAIGQLACRILFATKAIGFDAGSQQTPFLLPNASRRYESRWLNFKIPEDTKAVAFRDLRGCVLPCWVQGTHLGFSHNNITFFGDLETRQQVAATFNGPLVQSGPAREYPLNPTEAEHPYAGLCSEDGRHLALLFDPCLAFNTWQWQHNQTGPGQGELPVSPWKLMFYRLYNWSKFHQHYRSLLRTNLRHTFNFETQQLDFPHADRRGAVPHDNPQYIPMDAMDPSQ.

Positions 1347–1369 (DRRGAVPHDNPQYIPMDAMDPSQ) are disordered.

Its subcellular location is the virion tegument. In Connochaetes taurinus (Blue wildebeest), this protein is Probable tegument protein antigen 3 (3).